A 250-amino-acid polypeptide reads, in one-letter code: uncharacterized protein (250 aa).

The stretch at 165-208 (HLNLETANTKATEYQKNYQEELKQRQELRQKLLQERTQKMLEAL) forms a coiled coil. Positions 201-233 (TQKMLEALHQEETPEQDARDTAKKKTDQEEHTM) are enriched in basic and acidic residues. The disordered stretch occupies residues 201–250 (TQKMLEALHQEETPEQDARDTAKKKTDQEEHTMRKANAPKTKASGEAPTP).

This is an uncharacterized protein from Treponema pallidum (strain Nichols).